Consider the following 367-residue polypeptide: Phosphoribosylaminoimidazole-succinocarboxamide synthase (367 aa).

The protein belongs to the SAICAR synthetase family.

It catalyses the reaction 5-amino-1-(5-phospho-D-ribosyl)imidazole-4-carboxylate + L-aspartate + ATP = (2S)-2-[5-amino-1-(5-phospho-beta-D-ribosyl)imidazole-4-carboxamido]succinate + ADP + phosphate + 2 H(+). The protein operates within purine metabolism; IMP biosynthesis via de novo pathway; 5-amino-1-(5-phospho-D-ribosyl)imidazole-4-carboxamide from 5-amino-1-(5-phospho-D-ribosyl)imidazole-4-carboxylate: step 1/2. The protein is Phosphoribosylaminoimidazole-succinocarboxamide synthase of Shewanella pealeana (strain ATCC 700345 / ANG-SQ1).